A 156-amino-acid polypeptide reads, in one-letter code: UPF0266 membrane protein NT01EI_1718 (156 aa).

3 helical membrane passes run 6–26, 46–63, and 67–87; these read IALL…EAIM, DSLI…RNIS, and APFT…IFYL.

Belongs to the UPF0266 family.

It is found in the cell inner membrane. This chain is UPF0266 membrane protein NT01EI_1718, found in Edwardsiella ictaluri (strain 93-146).